A 79-amino-acid polypeptide reads, in one-letter code: RNA-binding protein Hfq (79 aa).

The 61-residue stretch at aspartate 10–isoleucine 70 folds into the Sm domain.

This sequence belongs to the Hfq family. In terms of assembly, homohexamer.

RNA chaperone that binds small regulatory RNA (sRNAs) and mRNAs to facilitate mRNA translational regulation in response to envelope stress, environmental stress and changes in metabolite concentrations. Also binds with high specificity to tRNAs. The protein is RNA-binding protein Hfq of Ruegeria pomeroyi (strain ATCC 700808 / DSM 15171 / DSS-3) (Silicibacter pomeroyi).